Consider the following 485-residue polypeptide: Cysteine--tRNA ligase (485 aa).

C27 is a binding site for Zn(2+). The 'HIGH' region motif lies at 29 to 39 (ITAYDFSHIGH). Positions 208, 233, and 237 each coordinate Zn(2+). The short motif at 265–269 (KMSKS) is the 'KMSKS' region element. K268 is a binding site for ATP.

Belongs to the class-I aminoacyl-tRNA synthetase family. In terms of assembly, monomer. Zn(2+) is required as a cofactor.

The protein localises to the cytoplasm. The catalysed reaction is tRNA(Cys) + L-cysteine + ATP = L-cysteinyl-tRNA(Cys) + AMP + diphosphate. The protein is Cysteine--tRNA ligase of Lawsonia intracellularis (strain PHE/MN1-00).